A 73-amino-acid chain; its full sequence is Disintegrin lachesin (73 aa).

The Disintegrin domain occupies 1–73 (EAGEECDCGA…ADCPRNGYYG (73 aa)). 6 cysteine pairs are disulfide-bonded: Cys-6-Cys-21, Cys-8-Cys-16, Cys-15-Cys-38, Cys-29-Cys-35, Cys-34-Cys-59, and Cys-47-Cys-66. The Cell attachment site signature appears at 51–53 (RGD). Residues 51–73 (RGDNPDDRCTGQSADCPRNGYYG) form a disordered region.

This sequence belongs to the venom metalloproteinase (M12B) family. P-II subfamily. P-IIa sub-subfamily. As to quaternary structure, monomer (disintegrin). In terms of tissue distribution, expressed by the venom gland.

Its subcellular location is the secreted. Functionally, inhibits fibrinogen interaction with platelets. Acts by binding to alpha-IIb/beta-3 (ITGA2B/ITGB3) on the platelet surface and inhibits aggregation induced by ADP, thrombin, platelet-activating factor and collagen. The polypeptide is Disintegrin lachesin (Lachesis muta muta (Bushmaster)).